The chain runs to 512 residues: N-acetyltryptophan 6-hydroxylase ivoC (512 aa).

A helical membrane pass occupies residues 6-26; sequence LVFSFPAWALLLVLTLLYTLY. N-linked (GlcNAc...) asparagine glycosylation is present at Asn118. Cys453 lines the heme pocket.

This sequence belongs to the cytochrome P450 family. The cofactor is heme.

Its subcellular location is the membrane. It functions in the pathway pigment biosynthesis. N-acetyltryptophan 6-hydroxylase; part of the pathway that mediates the biosynthesis of the gray-brown conidiophore pigment. The first step of the pathway is performed by the nonribosomal peptide synthetase ivoA that catalyzes ATP-dependent unidirectional stereoinversion of L-tryptophan to D-tryptophan with complete conversion. While the stereoinversion is catalyzed by the epimerization (E) domain of ivoA, the terminal condensation (C) domain stereoselectively hydrolyzes D-tryptophanyl-S-phosphopantetheine thioester and thus represents a non-canonical C domain function. D-tryptophan is acetylated, probably by an endogenous acetyltransferase. N-acetyltryptophan is further 6-hydroxylated into N-acetyl-6-hydroxytryptophan (AHT) by the cytochrome P450 monooxygenase ivoC. N-acetyl-6-hydroxytryptophan is substrate of the N-acetyl-6-hydroxytryptophan oxidase ivoB to produce the gray-brown conidiophore pigment. The chain is N-acetyltryptophan 6-hydroxylase ivoC from Emericella nidulans (strain FGSC A4 / ATCC 38163 / CBS 112.46 / NRRL 194 / M139) (Aspergillus nidulans).